A 202-amino-acid chain; its full sequence is MSRYRGPRLRIVRRLGDLPGLTRKSARRAYPPGQHGQNRRKRSEYAIRLEEKQKLLYNYGVCERQLLRYVKKARRAGGSTGKVLLELLEMRLDNTVFRLGMAPTIPSARQLVNHGHVTVNGKVVSIASYQCKPGEVISVKEKEKSKEMVKTNLQYPGLANIPSHLEFDKNKLVGKVNGIVEREWVALQINELLIVEYYSRQA.

The interval 22-43 is disordered; that stretch reads TRKSARRAYPPGQHGQNRRKRS. The S4 RNA-binding domain maps to 90-152; the sequence is MRLDNTVFRL…EKSKEMVKTN (63 aa).

Belongs to the universal ribosomal protein uS4 family. Part of the 30S ribosomal subunit. Contacts protein S5. The interaction surface between S4 and S5 is involved in control of translational fidelity.

In terms of biological role, one of the primary rRNA binding proteins, it binds directly to 16S rRNA where it nucleates assembly of the body of the 30S subunit. Its function is as follows. With S5 and S12 plays an important role in translational accuracy. The protein is Small ribosomal subunit protein uS4 of Trichodesmium erythraeum (strain IMS101).